Here is a 233-residue protein sequence, read N- to C-terminus: Large ribosomal subunit protein uL1 (233 aa).

This sequence belongs to the universal ribosomal protein uL1 family. Part of the 50S ribosomal subunit.

In terms of biological role, binds directly to 23S rRNA. The L1 stalk is quite mobile in the ribosome, and is involved in E site tRNA release. Protein L1 is also a translational repressor protein, it controls the translation of the L11 operon by binding to its mRNA. The polypeptide is Large ribosomal subunit protein uL1 (Marinomonas sp. (strain MWYL1)).